The sequence spans 118 residues: Small ribosomal subunit protein uS13 (118 aa).

Residues 94–118 (SLPLRGQRTKTNARTRKGPRKPIKK) are disordered.

This sequence belongs to the universal ribosomal protein uS13 family. As to quaternary structure, part of the 30S ribosomal subunit. Forms a loose heterodimer with protein S19. Forms two bridges to the 50S subunit in the 70S ribosome.

Its function is as follows. Located at the top of the head of the 30S subunit, it contacts several helices of the 16S rRNA. In the 70S ribosome it contacts the 23S rRNA (bridge B1a) and protein L5 of the 50S subunit (bridge B1b), connecting the 2 subunits; these bridges are implicated in subunit movement. Contacts the tRNAs in the A and P-sites. In Aliivibrio fischeri (strain ATCC 700601 / ES114) (Vibrio fischeri), this protein is Small ribosomal subunit protein uS13.